The sequence spans 315 residues: 4-hydroxy-3-methylbut-2-enyl diphosphate reductase (315 aa).

Residue Cys12 coordinates [4Fe-4S] cluster. (2E)-4-hydroxy-3-methylbut-2-enyl diphosphate is bound by residues His41 and His74. Dimethylallyl diphosphate is bound by residues His41 and His74. His41 and His74 together coordinate isopentenyl diphosphate. Cys96 serves as a coordination point for [4Fe-4S] cluster. His124 contacts (2E)-4-hydroxy-3-methylbut-2-enyl diphosphate. A dimethylallyl diphosphate-binding site is contributed by His124. An isopentenyl diphosphate-binding site is contributed by His124. Glu126 serves as the catalytic Proton donor. (2E)-4-hydroxy-3-methylbut-2-enyl diphosphate is bound at residue Thr168. Cys198 provides a ligand contact to [4Fe-4S] cluster. 4 residues coordinate (2E)-4-hydroxy-3-methylbut-2-enyl diphosphate: Ser226, Ser227, Asn228, and Ser270. Ser226, Ser227, Asn228, and Ser270 together coordinate dimethylallyl diphosphate. The isopentenyl diphosphate site is built by Ser226, Ser227, Asn228, and Ser270.

The protein belongs to the IspH family. The cofactor is [4Fe-4S] cluster.

The catalysed reaction is isopentenyl diphosphate + 2 oxidized [2Fe-2S]-[ferredoxin] + H2O = (2E)-4-hydroxy-3-methylbut-2-enyl diphosphate + 2 reduced [2Fe-2S]-[ferredoxin] + 2 H(+). It catalyses the reaction dimethylallyl diphosphate + 2 oxidized [2Fe-2S]-[ferredoxin] + H2O = (2E)-4-hydroxy-3-methylbut-2-enyl diphosphate + 2 reduced [2Fe-2S]-[ferredoxin] + 2 H(+). It functions in the pathway isoprenoid biosynthesis; dimethylallyl diphosphate biosynthesis; dimethylallyl diphosphate from (2E)-4-hydroxy-3-methylbutenyl diphosphate: step 1/1. The protein operates within isoprenoid biosynthesis; isopentenyl diphosphate biosynthesis via DXP pathway; isopentenyl diphosphate from 1-deoxy-D-xylulose 5-phosphate: step 6/6. Its function is as follows. Catalyzes the conversion of 1-hydroxy-2-methyl-2-(E)-butenyl 4-diphosphate (HMBPP) into a mixture of isopentenyl diphosphate (IPP) and dimethylallyl diphosphate (DMAPP). Acts in the terminal step of the DOXP/MEP pathway for isoprenoid precursor biosynthesis. This Pseudomonas savastanoi pv. phaseolicola (strain 1448A / Race 6) (Pseudomonas syringae pv. phaseolicola (strain 1448A / Race 6)) protein is 4-hydroxy-3-methylbut-2-enyl diphosphate reductase.